We begin with the raw amino-acid sequence, 165 residues long: Growth arrest and DNA damage-inducible protein GADD45 alpha (165 aa).

T2 carries the phosphothreonine modification.

The protein belongs to the GADD45 family. As to quaternary structure, interacts with AURKA, PCNA, GADD45GIP1 and MAPK14.

The protein localises to the nucleus. In terms of biological role, might affect PCNA interaction with some CDK (cell division protein kinase) complexes; stimulates DNA excision repair in vitro and inhibits entry of cells into S phase. In T-cells, functions as a regulator of p38 MAPKs by inhibiting p88 phosphorylation and activity. The protein is Growth arrest and DNA damage-inducible protein GADD45 alpha (Gadd45a) of Rattus norvegicus (Rat).